Here is a 176-residue protein sequence, read N- to C-terminus: Large ribosomal subunit protein uL16 (176 aa).

Belongs to the universal ribosomal protein uL16 family.

The protein is Large ribosomal subunit protein uL16 of Halobacterium salinarum (strain ATCC 29341 / DSM 671 / R1).